Consider the following 176-residue polypeptide: Ribosome rescue factor SmrB (176 aa).

Residues leucine 93 to aspartate 168 enclose the Smr domain.

The protein belongs to the SmrB family. As to quaternary structure, associates with collided ribosomes, but not with correctly translating polysomes.

Acts as a ribosome collision sensor. Detects stalled/collided disomes (pairs of ribosomes where the leading ribosome is stalled and a second ribosome has collided with it) and endonucleolytically cleaves mRNA at the 5' boundary of the stalled ribosome. Stalled/collided disomes form a new interface (primarily via the 30S subunits) that binds SmrB. Cleaved mRNA becomes available for tmRNA ligation, leading to ribosomal subunit dissociation and rescue of stalled ribosomes. The chain is Ribosome rescue factor SmrB from Shewanella baltica (strain OS223).